A 1201-amino-acid chain; its full sequence is Autophagy-related protein 11 (1201 aa).

The disordered stretch occupies residues 90-109 (FPFLGRPSTPTKGSDNSTGT). Residues 97 to 109 (STPTKGSDNSTGT) show a composition bias toward polar residues. The stretch at 418 to 452 (LLRSDDMVRSLRDEKSKLEEKVKGSESRIRKLEDL) forms a coiled coil. Disordered stretches follow at residues 458 to 503 (HMGR…SEEK) and 525 to 545 (KLQK…QEVQ). Residues 485–499 (RRSSVSSRRMSSNQS) are compositionally biased toward low complexity. Basic and acidic residues predominate over residues 525-542 (KLQKDAHAERQSNTDKIQ). Coiled coils occupy residues 566–670 (RRFL…ALQA) and 710–828 (SAKA…WKER). Disordered stretches follow at residues 1052–1076 (SMNG…DDEN) and 1115–1201 (DARG…LQGP). Residues 1133–1166 (RTLSKSLDSRRNSSNSKKGPATPSQRGNDSTTDL) show a composition bias toward polar residues. Basic and acidic residues predominate over residues 1191 to 1201 (EEVRRDQLQGP).

Belongs to the ATG11 family. As to quaternary structure, homodimer and potential homooligomers.

It is found in the preautophagosomal structure membrane. Its function is as follows. Selective autophagy-specific protein required for pexophagy and mitophagy. In contrast to its Saccharomyces cerevisiae ATG11 ortholog, is not involved in non-selective autophagy nor in cytoplasm to vacuole transport (Cvt). The chain is Autophagy-related protein 11 from Aspergillus oryzae (strain ATCC 42149 / RIB 40) (Yellow koji mold).